Here is a 142-residue protein sequence, read N- to C-terminus: 3-hydroxyacyl-[acyl-carrier-protein] dehydratase FabZ (142 aa).

H48 is an active-site residue.

The protein belongs to the thioester dehydratase family. FabZ subfamily.

The protein resides in the cytoplasm. It carries out the reaction a (3R)-hydroxyacyl-[ACP] = a (2E)-enoyl-[ACP] + H2O. Involved in unsaturated fatty acids biosynthesis. Catalyzes the dehydration of short chain beta-hydroxyacyl-ACPs and long chain saturated and unsaturated beta-hydroxyacyl-ACPs. The sequence is that of 3-hydroxyacyl-[acyl-carrier-protein] dehydratase FabZ from Prochlorococcus marinus (strain MIT 9313).